The following is a 122-amino-acid chain: Small ribosomal subunit protein uS12c (122 aa).

The protein belongs to the universal ribosomal protein uS12 family. In terms of assembly, part of the 30S ribosomal subunit.

The protein localises to the plastid. The protein resides in the chloroplast. Its function is as follows. With S4 and S5 plays an important role in translational accuracy. Located at the interface of the 30S and 50S subunits. The protein is Small ribosomal subunit protein uS12c (rps12) of Illicium oligandrum (Star anise).